The chain runs to 338 residues: Formamidase (338 aa).

A CN hydrolase domain is found at 14–257 (VGIGLVQLQL…NEIITAEVRP (244 aa)). E60 acts as the Proton acceptor in catalysis. Residue K129 is the Proton donor of the active site. C162 functions as the Nucleophile in the catalytic mechanism.

The protein belongs to the carbon-nitrogen hydrolase superfamily. Aliphatic amidase family.

It carries out the reaction formamide + H2O = formate + NH4(+). Functionally, is an aliphatic amidase with a restricted substrate specificity, as it only hydrolyzes formamide. This is Formamidase from Allorhizobium ampelinum (strain ATCC BAA-846 / DSM 112012 / S4) (Agrobacterium vitis (strain S4)).